The primary structure comprises 1032 residues: Exportin-T (1032 aa).

This sequence belongs to the exportin family.

The protein resides in the nucleus. It is found in the cytoplasm. Functionally, tRNA nucleus export receptor which facilitates tRNA translocation across the nuclear pore complex. Involved in pre-tRNA splicing, probably by affecting the interaction of pre-tRNA with splicing endonuclease. The polypeptide is Exportin-T (los1) (Aspergillus fumigatus (strain ATCC MYA-4609 / CBS 101355 / FGSC A1100 / Af293) (Neosartorya fumigata)).